Reading from the N-terminus, the 142-residue chain is Large ribosomal subunit protein uL11 (142 aa).

This sequence belongs to the universal ribosomal protein uL11 family. As to quaternary structure, part of the ribosomal stalk of the 50S ribosomal subunit. Interacts with L10 and the large rRNA to form the base of the stalk. L10 forms an elongated spine to which L12 dimers bind in a sequential fashion forming a multimeric L10(L12)X complex. One or more lysine residues are methylated.

Forms part of the ribosomal stalk which helps the ribosome interact with GTP-bound translation factors. In Hydrogenovibrio crunogenus (strain DSM 25203 / XCL-2) (Thiomicrospira crunogena), this protein is Large ribosomal subunit protein uL11.